Consider the following 935-residue polypeptide: ABC transporter A family member 7 (935 aa).

7 helical membrane-spanning segments follow: residues 34 to 54, 338 to 358, 392 to 412, 424 to 444, 454 to 474, 483 to 503, and 528 to 548; these read LIMI…LFDT, IASL…FPVI, FLTI…AIGL, FVFY…VSSV, ASYI…NFLI, WIIV…YELA, and DDVF…AYYI. The segment at 571–591 is disordered; sequence SLRRPSLQRQGSKVSVDMEKP. One can recognise an ABC transporter domain in the interval 613–850; it reads IVCDNLKKVY…YGGSYVFTMT (238 aa). 651–658 provides a ligand contact to ATP; sequence GPNGAGKT.

This sequence belongs to the ABC transporter superfamily. ABCA family. CPR flippase (TC 3.A.1.211) subfamily.

It localises to the membrane. The sequence is that of ABC transporter A family member 7 (ABCA7) from Arabidopsis thaliana (Mouse-ear cress).